A 663-amino-acid chain; its full sequence is Beta-galactosidase BgaH (663 aa).

Arg-103 lines the substrate pocket. Residue Cys-107 participates in Zn(2+) binding. Asn-141 contacts substrate. Glu-142 acts as the Proton donor in catalysis. Residues Cys-151, Cys-153, and Cys-156 each contribute to the Zn(2+) site. The Nucleophile role is filled by Glu-311. Residues Trp-319 and 359 to 362 contribute to the substrate site; that span reads EQYH.

It belongs to the glycosyl hydrolase 42 family. In terms of assembly, homodimer.

The catalysed reaction is Hydrolysis of terminal non-reducing beta-D-galactose residues in beta-D-galactosides.. With respect to regulation, requires 4 M NaCl for maximal activity. Loss of activity if DTT or beta-mercaptoethanol is omitted from buffers. Addition of 5-20 mM EDTA, 1 mM Cu(2+) or 1 mM Zn(2+) results in loss of activity. In terms of biological role, when overexpressed, cleaves several different substrates including o-nitrophenyl-beta-D-galactopyranoside (ONPG), chromogen 5-bromo-4-chloro-3-indolyl-beta-D-galactopyranoside (X-Gal) and lactulose, but not lactose. Also has beta-D-fucosidase activity. No beta-L-fucosidase, beta-glucosidase, beta-arabinosidase or beta-xylosidase activity. This Haloferax lucentense (strain DSM 14919 / JCM 9276 / NCIMB 13854 / Aa 2.2) (Haloferax alicantei) protein is Beta-galactosidase BgaH.